The primary structure comprises 452 residues: MQRRIMGIETEFGVTCTFHGHRRLSPDEVARYLFRRVVSWGRSSNVFLRNGARLYLDVGSHPEYATAECDSLTQLVTHDRAGERVLEDLLIDAEQRLADEGIGGDIYLFKNNTDSAGNSYGCHENYLIVRAGEFSRISDVLLPFLVTRQLICGAGKVLQTPKAATFCLSQRAEHIWEGVSSATTRSRPIINTRDEPHADAEKYRRLHVIVGDSNMSESTTMLKVGSASLVLEMIEAGVAFRDFSLDNPIRAIREVSHDLTGRRPVRLAGGRQASALDIQREYYARAVEYLQTREPNTQIEQVVDLWGRQLDAVESQDFAKVDTEIDWVIKRKLFQRYQDRYNMELSDPKISQLDLAYHDIKRGRGVFDLLQRKGLAARITTDEEIEAAVNTPPQTTRAKLRGEFISAAQEAGRDFTVDWVHLKLNDQAQRTVLCKDPFRSVDERVKRLIASM.

Residue E9 participates in Mg(2+) binding. R53 is an ATP binding site. Y55 lines the Mg(2+) pocket. The active-site Proton acceptor is the D57. E63 contributes to the Mg(2+) binding site. The ATP site is built by T66 and W419.

This sequence belongs to the Pup ligase/Pup deamidase family. Pup-conjugating enzyme subfamily.

It catalyses the reaction ATP + [prokaryotic ubiquitin-like protein]-L-glutamate + [protein]-L-lysine = ADP + phosphate + N(6)-([prokaryotic ubiquitin-like protein]-gamma-L-glutamyl)-[protein]-L-lysine.. Its pathway is protein degradation; proteasomal Pup-dependent pathway. It functions in the pathway protein modification; protein pupylation. Functionally, catalyzes the covalent attachment of the prokaryotic ubiquitin-like protein modifier Pup to the proteasomal substrate proteins, thereby targeting them for proteasomal degradation. This tagging system is termed pupylation. The ligation reaction involves the side-chain carboxylate of the C-terminal glutamate of Pup and the side-chain amino group of a substrate lysine. This chain is Pup--protein ligase, found in Mycolicibacterium vanbaalenii (strain DSM 7251 / JCM 13017 / BCRC 16820 / KCTC 9966 / NRRL B-24157 / PYR-1) (Mycobacterium vanbaalenii).